Reading from the N-terminus, the 277-residue chain is 3-methyl-2-oxobutanoate hydroxymethyltransferase (277 aa).

2 residues coordinate Mg(2+): aspartate 49 and aspartate 88. 3-methyl-2-oxobutanoate-binding positions include 49 to 50, aspartate 88, and lysine 118; that span reads DS. Glutamate 120 contributes to the Mg(2+) binding site. Catalysis depends on glutamate 186, which acts as the Proton acceptor.

Belongs to the PanB family. Homodecamer; pentamer of dimers. It depends on Mg(2+) as a cofactor.

It is found in the cytoplasm. It carries out the reaction 3-methyl-2-oxobutanoate + (6R)-5,10-methylene-5,6,7,8-tetrahydrofolate + H2O = 2-dehydropantoate + (6S)-5,6,7,8-tetrahydrofolate. It functions in the pathway cofactor biosynthesis; (R)-pantothenate biosynthesis; (R)-pantoate from 3-methyl-2-oxobutanoate: step 1/2. Catalyzes the reversible reaction in which hydroxymethyl group from 5,10-methylenetetrahydrofolate is transferred onto alpha-ketoisovalerate to form ketopantoate. This Cereibacter sphaeroides (strain ATCC 17029 / ATH 2.4.9) (Rhodobacter sphaeroides) protein is 3-methyl-2-oxobutanoate hydroxymethyltransferase.